A 469-amino-acid chain; its full sequence is tRNA(Ile)-lysidine synthase (469 aa).

26–31 provides a ligand contact to ATP; it reads SGGPDS.

It belongs to the tRNA(Ile)-lysidine synthase family.

It localises to the cytoplasm. The catalysed reaction is cytidine(34) in tRNA(Ile2) + L-lysine + ATP = lysidine(34) in tRNA(Ile2) + AMP + diphosphate + H(+). Ligates lysine onto the cytidine present at position 34 of the AUA codon-specific tRNA(Ile) that contains the anticodon CAU, in an ATP-dependent manner. Cytidine is converted to lysidine, thus changing the amino acid specificity of the tRNA from methionine to isoleucine. The polypeptide is tRNA(Ile)-lysidine synthase (Clostridium perfringens (strain ATCC 13124 / DSM 756 / JCM 1290 / NCIMB 6125 / NCTC 8237 / Type A)).